A 491-amino-acid chain; its full sequence is Glutamyl-tRNA(Gln) amidotransferase subunit A (491 aa).

Catalysis depends on charge relay system residues K79 and S158. S182 functions as the Acyl-ester intermediate in the catalytic mechanism.

Belongs to the amidase family. GatA subfamily. Heterotrimer of A, B and C subunits.

It carries out the reaction L-glutamyl-tRNA(Gln) + L-glutamine + ATP + H2O = L-glutaminyl-tRNA(Gln) + L-glutamate + ADP + phosphate + H(+). Allows the formation of correctly charged Gln-tRNA(Gln) through the transamidation of misacylated Glu-tRNA(Gln) in organisms which lack glutaminyl-tRNA synthetase. The reaction takes place in the presence of glutamine and ATP through an activated gamma-phospho-Glu-tRNA(Gln). The polypeptide is Glutamyl-tRNA(Gln) amidotransferase subunit A (Anaplasma phagocytophilum (strain HZ)).